A 126-amino-acid polypeptide reads, in one-letter code: 3-aminobutyryl-CoA ammonia lyase (126 aa).

Belongs to the KAL family. In terms of assembly, homohexamer.

The catalysed reaction is (3S)-3-aminobutanoyl-CoA = (2E)-butenoyl-CoA + NH4(+). It functions in the pathway amino-acid degradation; L-lysine degradation via acetate pathway. Its function is as follows. Involved in the anaerobic fermentation of lysine. Catalyzes the deamination of L-3-aminobutyryl-CoA to produce crotonoyl-CoA. The sequence is that of 3-aminobutyryl-CoA ammonia lyase from Acetoanaerobium sticklandii (strain ATCC 12662 / DSM 519 / JCM 1433 / CCUG 9281 / NCIMB 10654 / HF) (Clostridium sticklandii).